A 284-amino-acid chain; its full sequence is Tropomyosin (284 aa).

Methionine 1 bears the N-acetylmethionine mark. 2 disordered regions span residues 1-49 (MDAI…NQKK) and 103-126 (EERLNTATTKLAEASQAADESERM). Positions 1 to 284 (MDAIKKKMQA…DQAFSELSGF (284 aa)) form a coiled coil. The segment covering 12 to 45 (KLEKDNAMDKADTLEQQNKEANLRAEKTEEEIRA) has biased composition (basic and acidic residues).

It belongs to the tropomyosin family. As to quaternary structure, homodimer. Expressed in leg muscle and chest protection muscle (at protein level).

In terms of biological role, tropomyosin, in association with the troponin complex, plays a central role in the calcium dependent regulation of muscle contraction. In Chionoecetes opilio (Atlantic snow crab), this protein is Tropomyosin.